The primary structure comprises 972 residues: UvrABC system protein A (972 aa).

32–39 (GLSGSGKS) serves as a coordination point for ATP. Residues 257-285 (CPNGHALAVDDLEPRSFSFNSPYGACPEC) form a C4-type; atypical zinc finger. ABC transporter domains follow at residues 315 to 601 (WSNG…KDSI) and 621 to 950 (VDPR…KFLA). Residue 654–661 (GVSGSGKS) coordinates ATP. The segment at 753–779 (CEACTGDGTIKIEMNFLPDVYVPCEVC) adopts a C4-type zinc-finger fold.

It belongs to the ABC transporter superfamily. UvrA family. Forms a heterotetramer with UvrB during the search for lesions.

The protein resides in the cytoplasm. The UvrABC repair system catalyzes the recognition and processing of DNA lesions. UvrA is an ATPase and a DNA-binding protein. A damage recognition complex composed of 2 UvrA and 2 UvrB subunits scans DNA for abnormalities. When the presence of a lesion has been verified by UvrB, the UvrA molecules dissociate. The chain is UvrABC system protein A from Mycobacterium bovis (strain ATCC BAA-935 / AF2122/97).